Reading from the N-terminus, the 563-residue chain is Arginine--tRNA ligase (563 aa).

Residues 121–131 (PNIAKPFSIGH) carry the 'HIGH' region motif.

This sequence belongs to the class-I aminoacyl-tRNA synthetase family. As to quaternary structure, monomer.

The protein localises to the cytoplasm. The enzyme catalyses tRNA(Arg) + L-arginine + ATP = L-arginyl-tRNA(Arg) + AMP + diphosphate. In Streptococcus pneumoniae serotype 4 (strain ATCC BAA-334 / TIGR4), this protein is Arginine--tRNA ligase (argS).